Consider the following 418-residue polypeptide: Gamma-glutamyl phosphate reductase (418 aa).

Belongs to the gamma-glutamyl phosphate reductase family.

It is found in the cytoplasm. It catalyses the reaction L-glutamate 5-semialdehyde + phosphate + NADP(+) = L-glutamyl 5-phosphate + NADPH + H(+). It participates in amino-acid biosynthesis; L-proline biosynthesis; L-glutamate 5-semialdehyde from L-glutamate: step 2/2. Functionally, catalyzes the NADPH-dependent reduction of L-glutamate 5-phosphate into L-glutamate 5-semialdehyde and phosphate. The product spontaneously undergoes cyclization to form 1-pyrroline-5-carboxylate. In Clostridium acetobutylicum (strain ATCC 824 / DSM 792 / JCM 1419 / IAM 19013 / LMG 5710 / NBRC 13948 / NRRL B-527 / VKM B-1787 / 2291 / W), this protein is Gamma-glutamyl phosphate reductase.